Consider the following 246-residue polypeptide: Flavin-dependent thymidylate synthase (246 aa).

A ThyX domain is found at 17-241 (ITVELVKSAA…PLTHAAFNAN (225 aa)). FAD-binding positions include Ser-69, 92 to 94 (RHR), and Glu-101. Residues 89–92 (EFMR), 101–105 (EESGR), and Arg-173 contribute to the dUMP site. The ThyX motif motif lies at 92–103 (RHRVGWSYNEES). FAD contacts are provided by residues 189–191 (NAR) and His-195. Arg-200 is a dUMP binding site. Arg-200 (involved in ionization of N3 of dUMP, leading to its activation) is an active-site residue.

It belongs to the thymidylate synthase ThyX family. Homotetramer. Requires FAD as cofactor.

The catalysed reaction is dUMP + (6R)-5,10-methylene-5,6,7,8-tetrahydrofolate + NADPH + H(+) = dTMP + (6S)-5,6,7,8-tetrahydrofolate + NADP(+). The protein operates within pyrimidine metabolism; dTTP biosynthesis. Functionally, catalyzes the reductive methylation of 2'-deoxyuridine-5'-monophosphate (dUMP) to 2'-deoxythymidine-5'-monophosphate (dTMP) while utilizing 5,10-methylenetetrahydrofolate (mTHF) as the methyl donor, and NADPH and FADH(2) as the reductant. The polypeptide is Flavin-dependent thymidylate synthase (Streptomyces coelicolor (strain ATCC BAA-471 / A3(2) / M145)).